The following is a 341-amino-acid chain: MVRLSDTPAPTESQKRLALAIIDFLNSSLKDGTLTADDAESIEIAQSCIADTFKVDPSDEAAVKDALGGQSLASIFSVYEKLRQKPSKEPASAGAQAQSTEAQQPKAGAPTPESDKLKSEGNAAMARKEYSKAIDLYTQALSIAPANPIYLSNRAAAYSASGQHEKAAEDAELATVVDPKYSKAWSRLGLARFDMADYKGAKEAYEKGIEAEGNGGSDAMKRGLETTKRKIEEANRGAEPPADDVDDAAGASRGAGGMPDLSSLASMLGGRGGGGGGMPDLSSIMSNPMFASMAQNLMSNPDMLNNLMNNPQLRQMAENFGRGGGMPDMSSLMSDPSLAEM.

The interval 86–123 (PSKEPASAGAQAQSTEAQQPKAGAPTPESDKLKSEGNA) is disordered. TPR repeat units lie at residues 114–147 (SDKLKSEGNAAMARKEYSKAIDLYTQALSIAPAN), 148–181 (PIYLSNRAAAYSASGQHEKAAEDAELATVVDPKY), and 182–215 (SKAWSRLGLARFDMADYKGAKEAYEKGIEAEGNG). Positions 232–280 (EEANRGAEPPADDVDDAAGASRGAGGMPDLSSLASMLGGRGGGGGGMPD) are disordered. Over residues 269 to 278 (GGRGGGGGGM) the composition is skewed to gly residues.

The protein belongs to the SGT family. In terms of assembly, forms homodimers. Component of the get4/get5/sgt2 sorting complex. Dimers of sgt2 bind directly a single get5. Binds HSC family members ssa1, sse1, hsp104 and hsc82 via its TPR domain.

The protein localises to the cytoplasm. Functionally, heat-shock protein cognate (HSC) co-chaperone that preferentially binds endoplasmic reticulum-destined tail-anchored (TA) proteins and directs them to the GET (guided entry of TA proteins) pathway via get4 and get5. Get4 and get5 form an obligate complex that catalyzes the transfer of tail-anchored proteins destined to the endoplasmic reticulum from sgt2 to the cytosolic targeting factor which then targets the TA protein to the ER membrane via get1/get2. This Aspergillus fumigatus (strain ATCC MYA-4609 / CBS 101355 / FGSC A1100 / Af293) (Neosartorya fumigata) protein is Heat-shock protein cognate (HSC) co-chaperone sgt12.